The primary structure comprises 659 residues: Cysteine-rich receptor-like protein kinase 5 (659 aa).

A signal peptide spans 1–24 (MSAYTSLNFLFLLTFFIGSLRVSA). Residues 25–279 (QLQDPTYVGH…FPPGKGKNST (255 aa)) lie on the Extracellular side of the membrane. Gnk2-homologous domains are found at residues 28–132 (DPTY…DRNI) and 138–243 (TTTT…VYPF). 2 N-linked (GlcNAc...) asparagine glycosylation sites follow: Asn-175 and Asn-277. A helical transmembrane segment spans residues 280 to 300 (VIIIAIVVPVAISVLICVAVF). Over 301–659 (SFHASKRAKK…AASITILAPR (359 aa)) the chain is Cytoplasmic. The Protein kinase domain occupies 340–619 (FSMCNKLGQG…QMLTTSSIAL (280 aa)). ATP is bound by residues 346–354 (LGQGGFGQV) and Lys-368. Tyr-413 carries the post-translational modification Phosphotyrosine. The active-site Proton acceptor is Asp-465. A Phosphothreonine modification is found at Thr-505. Tyr-513 bears the Phosphotyrosine mark.

Belongs to the protein kinase superfamily. Ser/Thr protein kinase family. CRK subfamily. Interacts with CRKIP1 (KAPP), CRKIP2 and CRKIP3, three kinase-associated type 2C proteins.

The protein localises to the membrane. It catalyses the reaction L-seryl-[protein] + ATP = O-phospho-L-seryl-[protein] + ADP + H(+). The catalysed reaction is L-threonyl-[protein] + ATP = O-phospho-L-threonyl-[protein] + ADP + H(+). Functionally, involved in multiple distinct defense responses. May function as a disease resistance (R) protein. The sequence is that of Cysteine-rich receptor-like protein kinase 5 (CRK5) from Arabidopsis thaliana (Mouse-ear cress).